The sequence spans 627 residues: Bromodomain adjacent to zinc finger domain protein 1A (627 aa).

Residues 222–272 (NARCKVCRKKGDGESMVLCDGCDRGHHIYCVRPKLKYVPEGDWFCPECHPK) form a PHD-type zinc finger. The interval 270-503 (HPKQRSHRLP…NRRSSGRHHG (234 aa)) is disordered. A compositionally biased stretch (basic residues) spans 272–283 (KQRSHRLPSRHR). Positions 281–327 (RHRYSMDSDEEEEEELDQKEEEEEEEEQEELSESENEQEDEMSEEES) form a coiled coil. The segment covering 287-326 (DSDEEEEEELDQKEEEEEEEEQEELSESENEQEDEMSEEE) has biased composition (acidic residues). Residues 348–359 (TGKLGPKPKTGK) are compositionally biased toward low complexity. 2 stretches are compositionally biased toward polar residues: residues 386–395 (EPTSRLSASD) and 402–412 (SPNSSLVNVVT). The span at 417-431 (GRGKGKGRGRGRGRL) shows a compositional bias: basic residues. The segment covering 486 to 496 (DISSLEQGNRR) has biased composition (polar residues). In terms of domain architecture, Bromo spans 502–605 (HGVHELSACE…SFFITEAQNL (104 aa)).

The protein belongs to the WAL family. Together with p18 and p20 proteins, it forms the Xenopus version of CHRAC. Post-translationally, phosphorylated in mitosis.

The protein resides in the nucleus. In terms of biological role, regulatory subunit of a chromatin remodeling complex, which forms ordered nucleosome arrays on chromatin and slides edge- and center-positioned histone octamers away from their original location on the DNA template to facilitate access to DNA during DNA-templated processes such as DNA replication, transcription, and repair. Involved in regulating the spacing of nucleosomes along the chromatin and have the ability to slide mononucleosomes to the center of a DNA template in an ATP-dependent manner. May play a role in transcriptional regulation. This chain is Bromodomain adjacent to zinc finger domain protein 1A (baz1a), found in Xenopus laevis (African clawed frog).